A 177-amino-acid chain; its full sequence is ATP synthase subunit delta 1 (177 aa).

This sequence belongs to the ATPase delta chain family. As to quaternary structure, F-type ATPases have 2 components, F(1) - the catalytic core - and F(0) - the membrane proton channel. F(1) has five subunits: alpha(3), beta(3), gamma(1), delta(1), epsilon(1). F(0) has three main subunits: a(1), b(2) and c(10-14). The alpha and beta chains form an alternating ring which encloses part of the gamma chain. F(1) is attached to F(0) by a central stalk formed by the gamma and epsilon chains, while a peripheral stalk is formed by the delta and b chains.

The protein resides in the cell inner membrane. Its function is as follows. F(1)F(0) ATP synthase produces ATP from ADP in the presence of a proton or sodium gradient. F-type ATPases consist of two structural domains, F(1) containing the extramembraneous catalytic core and F(0) containing the membrane proton channel, linked together by a central stalk and a peripheral stalk. During catalysis, ATP synthesis in the catalytic domain of F(1) is coupled via a rotary mechanism of the central stalk subunits to proton translocation. Functionally, this protein is part of the stalk that links CF(0) to CF(1). It either transmits conformational changes from CF(0) to CF(1) or is implicated in proton conduction. The protein is ATP synthase subunit delta 1 of Photobacterium profundum (strain SS9).